The chain runs to 651 residues: Probable potassium transport system protein Kup (651 aa).

Helical transmembrane passes span 41-61 (LVLGALGVVYGDIGTSPIYAF), 82-102 (VVSLIFWALTLVVTIKYVLFV), 130-150 (LILGVGICGAALFFGDAVITP), 163-183 (IVAPDLTPFVVPITVVILVTL), 194-214 (VAIVFGPIMALWFLALGASGL), 235-255 (FLMISPGIAFITVGAVFLAMT), 276-296 (WLWIVFPCLLLNYFGQAAFIL), 309-329 (MMPSFALLPMVLLATAATVIA), 366-386 (IYIPRVNLLLGLAVVILVLGF), 395-415 (AYGIAVTGNMLVTTVLLYIVM), 426-446 (ALPIIVGFLIIDIMFFGANII), and 450-470 (EGGWASIGIAAILVLIMWTWV).

Belongs to the HAK/KUP transporter (TC 2.A.72) family.

It localises to the cell inner membrane. It catalyses the reaction K(+)(in) + H(+)(in) = K(+)(out) + H(+)(out). Transport of potassium into the cell. Likely operates as a K(+):H(+) symporter. This chain is Probable potassium transport system protein Kup, found in Brucella anthropi (strain ATCC 49188 / DSM 6882 / CCUG 24695 / JCM 21032 / LMG 3331 / NBRC 15819 / NCTC 12168 / Alc 37) (Ochrobactrum anthropi).